Here is an 878-residue protein sequence, read N- to C-terminus: METSSSLPLSPISIEPEQPSHRDYDITTRRGVGTTGNPIELCTNHFNVSVRQPDVVFYQYTVSITTENGDAVDGTGISRKLMDQLFKTYSSDLDGKRLAYDGEKTLYTVGPLPQNEFDFLVIVEGSFSKRDCGVSDGGSSSGTCKRSKRSFLPRSYKVQIHYAAEIPLKTVLGTQRGAYTPDKSAQDALRVLDIVLRQQAAERGCLLVRQAFFHSDGHPMKVGGGVIGIRGLHSSFRPTHGGLSLNIDVSTTMILEPGPVIEFLKANQSVETPRQIDWIKAAKMLKHMRVKATHRNMEFKIIGLSSKPCNQQLFSMKIKDGEREVPIREITVYDYFKQTYTEPISSAYFPCLDVGKPDRPNYLPLEFCNLVSLQRYTKPLSGRQRVLLVESSRQKPLERIKTLNDAMHTYCYDKDPFLAGCGISIEKEMTQVEGRVLKPPMLKFGKNEDFQPCNGRWNFNNKMLLEPRAIKSWAIVNFSFPCDSSHISRELISCGMRKGIEIDRPFALVEEDPQYKKAGPVERVEKMIATMKLKFPDPPHFILCILPERKTSDIYGPWKKICLTEEGIHTQCICPIKISDQYLTNVLLKINSKLGGINSLLGIEYSYNIPLINKIPTLILGMDVSHGPPGRADVPSVAAVVGSKCWPLISRYRAAVRTQSPRLEMIDSLFQPIENTEKGDNGIMNELFVEFYRTSRARKPKQIIIFRDGVSESQFEQVLKIEVDQIIKAYQRLGESDVPKFTVIVAQKNHHTKLFQAKGPENVPAGTVVDTKIVHPTNYDFYMCAHAGKIGTSRPAHYHVLLDEIGFSPDDLQNLIHSLSYVNQRSTTATSIVAPVRYAHLAAAQVAQFTKFEGISEDGKVPELPRLHENVEGNMFFC.

Over residues 1–17 the composition is skewed to low complexity; that stretch reads METSSSLPLSPISIEPE. Residues 1–25 are disordered; it reads METSSSLPLSPISIEPEQPSHRDYD. One can recognise a PAZ domain in the interval 259-372; that stretch reads PVIEFLKANQ…LPLEFCNLVS (114 aa). Residues 541-851 form the Piwi domain; the sequence is FILCILPERK…AAAQVAQFTK (311 aa).

Belongs to the argonaute family. Ago subfamily. In terms of tissue distribution, expressed in roots, cotyledons and shoot meristematic region.

Its subcellular location is the nucleus. In terms of biological role, involved in transcriptional gene silencing (TGS). Component of the RISC complex that associate with the small interfering RNA (siRNA) pathway involved in direct cytosine methylation at endogenous DNA repeats. Required for the accumulation of specific siRNAs derived from transgene and heterochromatin-related endogenous loci. Involved in RNA-directed DNA methylation (RdDM) at specific endogenous loci. Probably not required for the accumulation of siRNAs derived from transgene inverted repeats that induce post-transcriptional gene silencing (PTGS). Associates mainly with small RNAs of 24 nucleotide in length and preferentially recruits small RNAs with a 5' terminal adenosine. Targeted by turnip yellows virus (TuYV) protein P0 (via F-box-like domain) for probable proteasome degradation and thereby inactivating AGO6 function in RNA silencing. In Arabidopsis thaliana (Mouse-ear cress), this protein is Protein argonaute 6 (AGO6).